The chain runs to 782 residues: Sulfate permease family protein 3 (782 aa).

12 consecutive transmembrane segments (helical) span residues 30–52 (YACS…TWLP), 64–84 (LSGG…LASI), 86–106 (GVPP…YIFF), 113–133 (ALGG…KVML), 196–216 (IHVA…MGVF), 232–252 (GFVV…MLGI), 274–294 (LDNV…FLVF), 302–322 (WLNS…VVGI), 359–379 (HIGL…ITVA), 398–418 (ALGF…TSGF), 433–453 (LTCL…GPAL), and 497–517 (FFLT…GFAV). An STAS domain is found at 546 to 700 (KRDLERIQGN…NKVGDAVKAA (155 aa)). Positions 728–742 (IDEESSDSNDNDDAE) are enriched in acidic residues. The disordered stretch occupies residues 728–782 (IDEESSDSNDNDDAEIQERITEESENSEEVMSETSVSIEDATSLTSSRNSINSEE). Residues 767-782 (DATSLTSSRNSINSEE) show a composition bias toward polar residues.

This sequence belongs to the SLC26A/SulP transporter (TC 2.A.53) family.

The protein resides in the membrane. Possible sulfate transporter. This Caenorhabditis elegans protein is Sulfate permease family protein 3 (sulp-3).